We begin with the raw amino-acid sequence, 386 residues long: Putative matrix metalloproteinase (386 aa).

Residues 1 to 34 (MPTAHFQHSIRYLNVTNMLIFSIISFLLIYQTNS) form the signal peptide. N-linked (GlcNAc...) asparagine; by host glycans are attached at residues Asn-14 and Asn-58. Residue His-186 participates in Zn(2+) binding. Glu-187 is an active-site residue. Zn(2+) contacts are provided by His-190 and His-196. Positions 235–258 (NEQSTHQSTRHRPHRRPSPDGSCR) are disordered.

This sequence belongs to the peptidase M10A family. Zn(2+) serves as cofactor.

The protein is Putative matrix metalloproteinase of Spodoptera frugiperda (Fall armyworm).